Consider the following 209-residue polypeptide: Uracil phosphoribosyltransferase (209 aa).

5-phospho-alpha-D-ribose 1-diphosphate contacts are provided by residues arginine 79, arginine 104, and aspartate 131–serine 139. Uracil-binding positions include isoleucine 194 and glycine 199 to alanine 201. Position 200 (aspartate 200) interacts with 5-phospho-alpha-D-ribose 1-diphosphate.

It belongs to the UPRTase family. It depends on Mg(2+) as a cofactor.

The catalysed reaction is UMP + diphosphate = 5-phospho-alpha-D-ribose 1-diphosphate + uracil. It functions in the pathway pyrimidine metabolism; UMP biosynthesis via salvage pathway; UMP from uracil: step 1/1. With respect to regulation, allosterically activated by GTP. In terms of biological role, catalyzes the conversion of uracil and 5-phospho-alpha-D-ribose 1-diphosphate (PRPP) to UMP and diphosphate. This chain is Uracil phosphoribosyltransferase, found in Bacillus licheniformis (strain ATCC 14580 / DSM 13 / JCM 2505 / CCUG 7422 / NBRC 12200 / NCIMB 9375 / NCTC 10341 / NRRL NRS-1264 / Gibson 46).